The chain runs to 64 residues: MFGKLGTSELVLILGIALIIFGPGKLPELGKSLGKAISEFKSFSKEVKEDISLDDKKANNTLND.

Residues 10–30 (LVLILGIALIIFGPGKLPELG) traverse the membrane as a helical segment.

Belongs to the TatA/E family. Forms a complex with TatC.

The protein resides in the cell membrane. Its function is as follows. Part of the twin-arginine translocation (Tat) system that transports large folded proteins containing a characteristic twin-arginine motif in their signal peptide across membranes. TatA could form the protein-conducting channel of the Tat system. The sequence is that of Sec-independent protein translocase protein TatA from Alkaliphilus oremlandii (strain OhILAs) (Clostridium oremlandii (strain OhILAs)).